The following is a 101-amino-acid chain: Small ribosomal subunit protein uS14A (101 aa).

The segment at 28-57 (KDIIRSPSSAPEQRSTAQRALARQPRDASP) is disordered. Residues 33–45 (SPSSAPEQRSTAQ) are compositionally biased toward polar residues.

Belongs to the universal ribosomal protein uS14 family. As to quaternary structure, part of the 30S ribosomal subunit. Contacts proteins S3 and S10.

In terms of biological role, binds 16S rRNA, required for the assembly of 30S particles and may also be responsible for determining the conformation of the 16S rRNA at the A site. The chain is Small ribosomal subunit protein uS14A from Mycobacterium bovis (strain ATCC BAA-935 / AF2122/97).